Here is a 195-residue protein sequence, read N- to C-terminus: Granulocyte colony-stimulating factor (195 aa).

The first 21 residues, 1–21, serve as a signal peptide directing secretion; sequence MKLMALQLLLWHIALWMVPEA. 2 disulfides stabilise this stretch: cysteine 57–cysteine 63 and cysteine 85–cysteine 95. Threonine 154 carries an O-linked (GalNAc...) threonine glycan.

Belongs to the IL-6 superfamily. In terms of assembly, monomer. O-glycosylated.

The protein localises to the secreted. In terms of biological role, granulocyte/macrophage colony-stimulating factors are cytokines that act in hematopoiesis by controlling the production, differentiation, and function of 2 related white cell populations of the blood, the granulocytes and the monocytes-macrophages. This CSF induces granulocytes. The polypeptide is Granulocyte colony-stimulating factor (CSF3) (Sus scrofa (Pig)).